The chain runs to 237 residues: Uridylate kinase (237 aa).

11-14 (KLSG) serves as a coordination point for ATP. Residue G53 participates in UMP binding. G54 and R58 together coordinate ATP. Residues D73 and 134-141 (TGNPFFTT) each bind UMP. 3 residues coordinate ATP: T161, Y167, and D170.

This sequence belongs to the UMP kinase family. As to quaternary structure, homohexamer.

It is found in the cytoplasm. It carries out the reaction UMP + ATP = UDP + ADP. It functions in the pathway pyrimidine metabolism; CTP biosynthesis via de novo pathway; UDP from UMP (UMPK route): step 1/1. With respect to regulation, inhibited by UTP. Its function is as follows. Catalyzes the reversible phosphorylation of UMP to UDP. The polypeptide is Uridylate kinase (Burkholderia vietnamiensis (strain G4 / LMG 22486) (Burkholderia cepacia (strain R1808))).